The chain runs to 415 residues: Casein kinase I isoform delta (415 aa).

One can recognise a Protein kinase domain in the interval Tyr9 to Phe277. ATP is bound by residues Ile15–Ile23 and Lys38. The active-site Proton acceptor is Asp128. The segment at His278–Glu364 is centrosomal localization signal (CLS). Basic and acidic residues predominate over residues Ala301–Leu315. Residues Ala301–Arg415 are disordered. Positions His317 to Pro342 are autoinhibitory. Residues Ser328 and Ser331 each carry the phosphoserine modification. A compositionally biased stretch (polar residues) spans Thr347 to Arg358. Position 370 is a phosphoserine (Ser370). Arg375 is modified (omega-N-methylarginine). Positions Asn380–Ile400 are enriched in polar residues. Residues Ser382, Ser383, Ser384, Ser407, and Ser411 each carry the phosphoserine modification.

The protein belongs to the protein kinase superfamily. CK1 Ser/Thr protein kinase family. Casein kinase I subfamily. Monomer. Component of the circadian core oscillator, which includes the CRY proteins, CLOCK, or NPAS2, ARTNL/BMAL1 or ARTNL2/BMAL2, CSNK1D and/or CSNK1E, TIMELESS and the PER proteins. Interacts with DNMT1 and MAP1A. Interacts directly with PER1 and PER2 which may lead to their degradation. Interacts with MAPT/TAU, SNAPIN, DBNDD2, AIB1/NCOA3 and ESR1. Interacts with AKAP9/AKAP450; this interaction promotes centrosomal subcellular location. Binds to tubulins in mitotic cells upon DNA damage. Interacts with GJA1. Interacts with DDX3X; this interaction enhances CSNK1D kinase activity in vitro, but it is unclear whether this interaction is physiologically relevant. Interacts with FAM83A, FAM83B, FAM83E and FAM83H (via DUF1669). In terms of processing, autophosphorylated on serine and threonine residues; this autophosphorylation represses activity. Reactivated by phosphatase-mediated dephosphorylation. May be dephosphorylated by PP1.

The protein resides in the cytoplasm. The protein localises to the nucleus. It localises to the cytoskeleton. It is found in the microtubule organizing center. Its subcellular location is the centrosome. The protein resides in the perinuclear region. The protein localises to the cell membrane. It localises to the spindle. It is found in the golgi apparatus. It catalyses the reaction L-seryl-[protein] + ATP = O-phospho-L-seryl-[protein] + ADP + H(+). The enzyme catalyses L-threonyl-[protein] + ATP = O-phospho-L-threonyl-[protein] + ADP + H(+). The catalysed reaction is L-seryl-[tau protein] + ATP = O-phospho-L-seryl-[tau protein] + ADP + H(+). It carries out the reaction L-threonyl-[tau protein] + ATP = O-phospho-L-threonyl-[tau protein] + ADP + H(+). Drug-mediated inhibition leads to a delay of the oscillations with the magnitude of this effect dependent upon the timing of drug administration. Inhibited by phosphorylation. Exhibits substrate-dependent heparin activation. Its function is as follows. Essential serine/threonine-protein kinase that regulates diverse cellular growth and survival processes including Wnt signaling, DNA repair and circadian rhythms. It can phosphorylate a large number of proteins. Casein kinases are operationally defined by their preferential utilization of acidic proteins such as caseins as substrates. Phosphorylates connexin-43/GJA1, MAP1A, SNAPIN, MAPT/TAU, TOP2A, DCK, HIF1A, EIF6, p53/TP53, DVL2, DVL3, ESR1, AIB1/NCOA3, DNMT1, PKD2, YAP1, PER1 and PER2. Central component of the circadian clock. In balance with PP1, determines the circadian period length through the regulation of the speed and rhythmicity of PER1 and PER2 phosphorylation. Controls PER1 and PER2 nuclear transport and degradation. YAP1 phosphorylation promotes its SCF(beta-TRCP) E3 ubiquitin ligase-mediated ubiquitination and subsequent degradation. DNMT1 phosphorylation reduces its DNA-binding activity. Phosphorylation of ESR1 and AIB1/NCOA3 stimulates their activity and coactivation. Phosphorylation of DVL2 and DVL3 regulates WNT3A signaling pathway that controls neurite outgrowth. Phosphorylates NEDD9/HEF1. EIF6 phosphorylation promotes its nuclear export. Triggers down-regulation of dopamine receptors in the forebrain. Activates DCK in vitro by phosphorylation. TOP2A phosphorylation favors DNA cleavable complex formation. May regulate the formation of the mitotic spindle apparatus in extravillous trophoblast. Modulates connexin-43/GJA1 gap junction assembly by phosphorylation. Probably involved in lymphocyte physiology. Regulates fast synaptic transmission mediated by glutamate. This is Casein kinase I isoform delta (CSNK1D) from Bos taurus (Bovine).